The primary structure comprises 325 residues: NADH-quinone oxidoreductase subunit H (325 aa).

Transmembrane regions (helical) follow at residues 11-31 (ILLS…CGAF), 81-101 (VIFT…FAIV), 114-134 (IGIL…LFAG), 154-174 (LSYE…AGSF), 186-206 (IWNV…GVAV), 237-257 (FFVG…TLFF), 265-285 (LPPF…FILI), and 304-324 (VCLP…LWQA).

Belongs to the complex I subunit 1 family. As to quaternary structure, NDH-1 is composed of 13 different subunits. Subunits NuoA, H, J, K, L, M, N constitute the membrane sector of the complex.

It localises to the cell inner membrane. It carries out the reaction a quinone + NADH + 5 H(+)(in) = a quinol + NAD(+) + 4 H(+)(out). In terms of biological role, NDH-1 shuttles electrons from NADH, via FMN and iron-sulfur (Fe-S) centers, to quinones in the respiratory chain. The immediate electron acceptor for the enzyme in this species is believed to be ubiquinone. Couples the redox reaction to proton translocation (for every two electrons transferred, four hydrogen ions are translocated across the cytoplasmic membrane), and thus conserves the redox energy in a proton gradient. This subunit may bind ubiquinone. This chain is NADH-quinone oxidoreductase subunit H, found in Enterobacter sp. (strain 638).